The chain runs to 751 residues: Semaphorin-3C (751 aa).

A signal peptide spans 1–21 (MAVLALHAVFGIFIYFSSVKG). A Sema domain is found at 28–511 (RVFLTFNELQ…SEEGVTQVPL (484 aa)). Asn-81 is a glycosylation site (N-linked (GlcNAc...) asparagine). Residues Cys-101 and Cys-112 are joined by a disulfide bond. Asn-123 carries N-linked (GlcNAc...) asparagine glycosylation. Disulfide bonds link Cys-130–Cys-139, Cys-266–Cys-378, and Cys-290–Cys-338. An N-linked (GlcNAc...) asparagine glycan is attached at Asn-268. Asn-465 is a glycosylation site (N-linked (GlcNAc...) asparagine). A disulfide bond links Cys-514 and Cys-532. In terms of domain architecture, Ig-like C2-type spans 571–655 (AYRNAAETVQ…TENNFKQTLA (85 aa)). N-linked (GlcNAc...) asparagine glycosylation is found at Asn-585 and Asn-586. Cys-643 and Cys-709 form a disulfide bridge. The span at 712–731 (SRQQGQRREEPQKMRGDYSK) shows a compositional bias: basic and acidic residues. The interval 712–751 (SRQQGQRREEPQKMRGDYSKLKALINSRKSRNRRNQLPAS) is disordered.

The protein belongs to the semaphorin family. In terms of tissue distribution, collapsin-1, -2, -3, and -5 bind to overlapping but distinct axon tracts.

The protein resides in the secreted. Functionally, induces the collapse and paralysis of neuronal growth cones. Could potentially act as repulsive cues toward specific neuronal populations. Binds to neuropilin. The polypeptide is Semaphorin-3C (SEMA3C) (Gallus gallus (Chicken)).